A 274-amino-acid polypeptide reads, in one-letter code: Shikimate dehydrogenase (NADP(+)) (274 aa).

Residues 20 to 22 and threonine 68 contribute to the shikimate site; that span reads SKS. The Proton acceptor role is filled by lysine 72. Aspartate 84 contacts NADP(+). Asparagine 93 and aspartate 109 together coordinate shikimate. Residues 131–135 and leucine 217 contribute to the NADP(+) site; that span reads GAGGA. Tyrosine 219 is a shikimate binding site. Glycine 240 contacts NADP(+).

This sequence belongs to the shikimate dehydrogenase family. As to quaternary structure, homodimer.

The catalysed reaction is shikimate + NADP(+) = 3-dehydroshikimate + NADPH + H(+). It functions in the pathway metabolic intermediate biosynthesis; chorismate biosynthesis; chorismate from D-erythrose 4-phosphate and phosphoenolpyruvate: step 4/7. Functionally, involved in the biosynthesis of the chorismate, which leads to the biosynthesis of aromatic amino acids. Catalyzes the reversible NADPH linked reduction of 3-dehydroshikimate (DHSA) to yield shikimate (SA). In Sphingopyxis alaskensis (strain DSM 13593 / LMG 18877 / RB2256) (Sphingomonas alaskensis), this protein is Shikimate dehydrogenase (NADP(+)).